The chain runs to 282 residues: NADPH-dependent 7-cyano-7-deazaguanine reductase (282 aa).

Substrate is bound at residue 88–90 (IES). 90 to 91 (SK) is a binding site for NADPH. The Thioimide intermediate role is filled by Cys190. Asp197 (proton donor) is an active-site residue. 229 to 230 (HE) contacts substrate. Position 258–259 (258–259 (RG)) interacts with NADPH.

This sequence belongs to the GTP cyclohydrolase I family. QueF type 2 subfamily. Homodimer.

The protein localises to the cytoplasm. The catalysed reaction is 7-aminomethyl-7-carbaguanine + 2 NADP(+) = 7-cyano-7-deazaguanine + 2 NADPH + 3 H(+). Its pathway is tRNA modification; tRNA-queuosine biosynthesis. Its function is as follows. Catalyzes the NADPH-dependent reduction of 7-cyano-7-deazaguanine (preQ0) to 7-aminomethyl-7-deazaguanine (preQ1). The sequence is that of NADPH-dependent 7-cyano-7-deazaguanine reductase from Escherichia coli O45:K1 (strain S88 / ExPEC).